We begin with the raw amino-acid sequence, 342 residues long: Vancomycin B-type resistance protein VanB (342 aa).

ATP is bound by residues lysine 132, phenylalanine 168–lysine 170, serine 176–serine 177, glutamate 206–glutamate 213, and phenylalanine 240. Residues tyrosine 136–threonine 337 form the ATP-grasp domain. Histidine 243 is a substrate binding site. Position 303–304 (asparagine 303–glutamate 304) interacts with ATP. Mg(2+)-binding residues include glutamate 304 and asparagine 306.

This sequence belongs to the D-alanine--D-alanine ligase family. Requires Mg(2+) as cofactor. The cofactor is Mn(2+).

Its subcellular location is the cell membrane. The catalysed reaction is (R)-lactate + D-alanine + ATP = D-alanyl-(R)-lactate + ADP + phosphate. Functionally, required for high-level resistance to glycopeptides antibiotics. D-Ala--D-Ala ligase of altered specificity which catalyzes ester bond formation between D-Ala and various D-hydroxy acids; producing a peptidoglycan which does not terminate in D-alanine but in D-lactate, thus preventing vancomycin binding. The sequence is that of Vancomycin B-type resistance protein VanB (vanB) from Enterococcus faecalis (strain ATCC 700802 / V583).